The chain runs to 65 residues: Large ribosomal subunit protein bL33c (65 aa).

This sequence belongs to the bacterial ribosomal protein bL33 family.

It localises to the plastid. It is found in the chloroplast. In Pyropia yezoensis (Susabi-nori), this protein is Large ribosomal subunit protein bL33c.